The sequence spans 246 residues: Bis(5'-nucleosyl)-tetraphosphatase PrpE [asymmetrical] (246 aa).

Belongs to the PrpE family. The cofactor is Ni(2+).

The catalysed reaction is P(1),P(4)-bis(5'-guanosyl) tetraphosphate + H2O = GMP + GTP + 2 H(+). In terms of biological role, asymmetrically hydrolyzes Ap4p to yield AMP and ATP. The chain is Bis(5'-nucleosyl)-tetraphosphatase PrpE [asymmetrical] from Bacillus thuringiensis (strain Al Hakam).